The chain runs to 541 residues: Chaperonin GroEL 2 (541 aa).

ATP-binding positions include 29–32 (TLGP), 86–90 (DGTTT), glycine 413, and aspartate 492.

This sequence belongs to the chaperonin (HSP60) family. In terms of assembly, forms a cylinder of 14 subunits composed of two heptameric rings stacked back-to-back. Interacts with the co-chaperonin GroES.

The protein localises to the cytoplasm. The catalysed reaction is ATP + H2O + a folded polypeptide = ADP + phosphate + an unfolded polypeptide.. Together with its co-chaperonin GroES, plays an essential role in assisting protein folding. The GroEL-GroES system forms a nano-cage that allows encapsulation of the non-native substrate proteins and provides a physical environment optimized to promote and accelerate protein folding. This chain is Chaperonin GroEL 2, found in Nocardia farcinica (strain IFM 10152).